The primary structure comprises 244 residues: 3-deoxy-manno-octulosonate cytidylyltransferase (244 aa).

Belongs to the KdsB family.

The protein resides in the cytoplasm. The catalysed reaction is 3-deoxy-alpha-D-manno-oct-2-ulosonate + CTP = CMP-3-deoxy-beta-D-manno-octulosonate + diphosphate. It participates in nucleotide-sugar biosynthesis; CMP-3-deoxy-D-manno-octulosonate biosynthesis; CMP-3-deoxy-D-manno-octulosonate from 3-deoxy-D-manno-octulosonate and CTP: step 1/1. The protein operates within bacterial outer membrane biogenesis; lipopolysaccharide biosynthesis. Functionally, activates KDO (a required 8-carbon sugar) for incorporation into bacterial lipopolysaccharide in Gram-negative bacteria. The polypeptide is 3-deoxy-manno-octulosonate cytidylyltransferase (Anaeromyxobacter sp. (strain Fw109-5)).